The sequence spans 281 residues: Nucleotide-binding protein MADE_1004170 (281 aa).

Gly-8–Ser-15 contacts ATP. Position 56 to 59 (Asp-56 to Asn-59) interacts with GTP.

The protein belongs to the RapZ-like family.

Functionally, displays ATPase and GTPase activities. The polypeptide is Nucleotide-binding protein MADE_1004170 (Alteromonas mediterranea (strain DSM 17117 / CIP 110805 / LMG 28347 / Deep ecotype)).